The primary structure comprises 70 residues: Phycocyanin-645 alpha-2 chain (70 aa).

R16 contacts (2R,3E)-phycocyanobilin. Mesobiliverdin-binding residues include C18, Y26, and K41.

The protein belongs to the phycoerythrin family. Heterotetramer of 2 different alpha chains and 2 identical beta chains which form 2 alpha-beta heterodimers within the heterotetramer. Contains one phycocyanobilin chromophore, one mesobiliverdin chromophore and one 15,16-dihydrobiliverdin chromophore with binding mediated by both the alpha and beta subunits.

It localises to the plastid. The protein localises to the chloroplast thylakoid membrane. In terms of biological role, light-harvesting photosynthetic tetrapyrrole chromophore-protein from the phycobiliprotein complex. The sequence is that of Phycocyanin-645 alpha-2 chain from Chroomonas sp.